Reading from the N-terminus, the 321-residue chain is 4-hydroxy-3-methylbut-2-enyl diphosphate reductase (321 aa).

A [4Fe-4S] cluster-binding site is contributed by cysteine 13. Residues histidine 41 and histidine 75 each coordinate (2E)-4-hydroxy-3-methylbut-2-enyl diphosphate. Histidine 41 and histidine 75 together coordinate dimethylallyl diphosphate. 2 residues coordinate isopentenyl diphosphate: histidine 41 and histidine 75. Residue cysteine 97 participates in [4Fe-4S] cluster binding. Histidine 125 is a (2E)-4-hydroxy-3-methylbut-2-enyl diphosphate binding site. A dimethylallyl diphosphate-binding site is contributed by histidine 125. Histidine 125 serves as a coordination point for isopentenyl diphosphate. The active-site Proton donor is glutamate 127. Threonine 168 serves as a coordination point for (2E)-4-hydroxy-3-methylbut-2-enyl diphosphate. Cysteine 225 contacts [4Fe-4S] cluster. Residues serine 253, serine 254, asparagine 255, and serine 302 each contribute to the (2E)-4-hydroxy-3-methylbut-2-enyl diphosphate site. Positions 253, 254, 255, and 302 each coordinate dimethylallyl diphosphate. Isopentenyl diphosphate is bound by residues serine 253, serine 254, asparagine 255, and serine 302.

This sequence belongs to the IspH family. It depends on [4Fe-4S] cluster as a cofactor.

The catalysed reaction is isopentenyl diphosphate + 2 oxidized [2Fe-2S]-[ferredoxin] + H2O = (2E)-4-hydroxy-3-methylbut-2-enyl diphosphate + 2 reduced [2Fe-2S]-[ferredoxin] + 2 H(+). It catalyses the reaction dimethylallyl diphosphate + 2 oxidized [2Fe-2S]-[ferredoxin] + H2O = (2E)-4-hydroxy-3-methylbut-2-enyl diphosphate + 2 reduced [2Fe-2S]-[ferredoxin] + 2 H(+). It functions in the pathway isoprenoid biosynthesis; dimethylallyl diphosphate biosynthesis; dimethylallyl diphosphate from (2E)-4-hydroxy-3-methylbutenyl diphosphate: step 1/1. Its pathway is isoprenoid biosynthesis; isopentenyl diphosphate biosynthesis via DXP pathway; isopentenyl diphosphate from 1-deoxy-D-xylulose 5-phosphate: step 6/6. Catalyzes the conversion of 1-hydroxy-2-methyl-2-(E)-butenyl 4-diphosphate (HMBPP) into a mixture of isopentenyl diphosphate (IPP) and dimethylallyl diphosphate (DMAPP). Acts in the terminal step of the DOXP/MEP pathway for isoprenoid precursor biosynthesis. The polypeptide is 4-hydroxy-3-methylbut-2-enyl diphosphate reductase (Pelodictyon phaeoclathratiforme (strain DSM 5477 / BU-1)).